The chain runs to 333 residues: Dehydrodolichyl diphosphate synthase complex subunit Dhdds (333 aa).

(2E,6E)-farnesyl diphosphate-binding residues include aspartate 34, glycine 35, arginine 37, arginine 38, and arginine 85. Residue aspartate 34 coordinates Mg(2+). Residues arginine 38, arginine 85, arginine 205, arginine 211, and serine 213 each coordinate isopentenyl diphosphate.

The protein belongs to the UPP synthase family. The active dehydrodolichyl diphosphate synthase complex is a heterotetramer composed of a dimer of heterodimer of DHDDS and NUS1. Interacts with NPC2. The cofactor is Mg(2+).

The protein resides in the endoplasmic reticulum membrane. It carries out the reaction n isopentenyl diphosphate + (2E,6E)-farnesyl diphosphate = a di-trans,poly-cis-polyprenyl diphosphate + n diphosphate. The protein operates within protein modification; protein glycosylation. Its pathway is lipid metabolism. With NUS1, forms the dehydrodolichyl diphosphate synthase (DDS) complex, an essential component of the dolichol monophosphate (Dol-P) biosynthetic machinery. Both subunits contribute to enzymatic activity, i.e. condensation of multiple copies of isopentenyl pyrophosphate (IPP) to farnesyl pyrophosphate (FPP) to produce dehydrodolichyl diphosphate (Dedol-PP), a precursor of dolichol phosphate which is utilized as a sugar carrier in protein glycosylation in the endoplasmic reticulum (ER). Synthesizes long-chain polyprenols, mostly of C95 and C100 chain length. Regulates the glycosylation and stability of nascent NPC2, thereby promoting trafficking of LDL-derived cholesterol. In Mus musculus (Mouse), this protein is Dehydrodolichyl diphosphate synthase complex subunit Dhdds.